We begin with the raw amino-acid sequence, 378 residues long: Spermidine/putrescine import ATP-binding protein PotA (378 aa).

One can recognise an ABC transporter domain in the interval 18-248 (VLLSGISKSF…PKNLFVAGFI (231 aa)). 50-57 (GPSGCGKT) contacts ATP.

The protein belongs to the ABC transporter superfamily. Spermidine/putrescine importer (TC 3.A.1.11.1) family. As to quaternary structure, the complex is composed of two ATP-binding proteins (PotA), two transmembrane proteins (PotB and PotC) and a solute-binding protein (PotD).

It localises to the cell inner membrane. It carries out the reaction ATP + H2O + polyamine-[polyamine-binding protein]Side 1 = ADP + phosphate + polyamineSide 2 + [polyamine-binding protein]Side 1.. Part of the ABC transporter complex PotABCD involved in spermidine/putrescine import. Responsible for energy coupling to the transport system. This chain is Spermidine/putrescine import ATP-binding protein PotA, found in Salmonella paratyphi A (strain ATCC 9150 / SARB42).